Reading from the N-terminus, the 379-residue chain is 1-deoxy-D-xylulose 5-phosphate reductoisomerase (379 aa).

NADPH is bound by residues Thr10, Gly11, Ser12, Ile13, Arg38, Asn39, and Asn121. Lys122 contributes to the 1-deoxy-D-xylulose 5-phosphate binding site. Glu123 serves as a coordination point for NADPH. Asp147 serves as a coordination point for Mn(2+). 1-deoxy-D-xylulose 5-phosphate is bound by residues Ser148, Glu149, Ser173, and His196. Glu149 is a Mn(2+) binding site. Gly202 lines the NADPH pocket. 1-deoxy-D-xylulose 5-phosphate-binding residues include Ser209, Asn214, Lys215, and Glu218. Glu218 is a binding site for Mn(2+).

The protein belongs to the DXR family. The cofactor is Mg(2+). Mn(2+) serves as cofactor.

It catalyses the reaction 2-C-methyl-D-erythritol 4-phosphate + NADP(+) = 1-deoxy-D-xylulose 5-phosphate + NADPH + H(+). It participates in isoprenoid biosynthesis; isopentenyl diphosphate biosynthesis via DXP pathway; isopentenyl diphosphate from 1-deoxy-D-xylulose 5-phosphate: step 1/6. Functionally, catalyzes the NADPH-dependent rearrangement and reduction of 1-deoxy-D-xylulose-5-phosphate (DXP) to 2-C-methyl-D-erythritol 4-phosphate (MEP). The sequence is that of 1-deoxy-D-xylulose 5-phosphate reductoisomerase from Chlamydia trachomatis serovar A (strain ATCC VR-571B / DSM 19440 / HAR-13).